Here is a 640-residue protein sequence, read N- to C-terminus: Protein ALTERED PHOSPHATE STARVATION RESPONSE 1 (640 aa).

The disordered stretch occupies residues 60–175 (TPLHLHHNPP…ATPQASSVVS (116 aa)). Pro residues predominate over residues 68–87 (PPSPSPPPPPPPRPPPPPLS). A compositionally biased stretch (low complexity) spans 88–103 (PGSETTTWTTTTTSSV). Residues 104–118 (LPPPPPPPPPPPPPS) are compositionally biased toward pro residues. Residues 144-173 (TTATRTATGTGSDAAVTTAPTTATPQASSV) are compositionally biased toward low complexity. A coiled-coil region spans residues 336–371 (KTEKAKKDVEKLESQLSVSSQAIQSASNEIIKLRET).

In terms of tissue distribution, expressed in the root tip of primary and lateral roots, specifically in the meristematic region, including the quiescent center and lateral root cap cells.

It localises to the nucleus. Required for the coordination of cell differentiation and cell elongation in the root tip. Required for the coordination of cell processes necessary for correct root growth in response to phosphate starvation, through the modulation of the auxin transporter protein PIN7. This Arabidopsis thaliana (Mouse-ear cress) protein is Protein ALTERED PHOSPHATE STARVATION RESPONSE 1.